We begin with the raw amino-acid sequence, 156 residues long: RING finger protein 224 (156 aa).

The RING-type zinc finger occupies Cys23–Arg70.

The protein is RING finger protein 224 (Rnf224) of Mus musculus (Mouse).